Reading from the N-terminus, the 374-residue chain is Putative glutamate--cysteine ligase 2 (374 aa).

This sequence belongs to the glutamate--cysteine ligase type 2 family. YbdK subfamily.

It catalyses the reaction L-cysteine + L-glutamate + ATP = gamma-L-glutamyl-L-cysteine + ADP + phosphate + H(+). Functionally, ATP-dependent carboxylate-amine ligase which exhibits weak glutamate--cysteine ligase activity. The polypeptide is Putative glutamate--cysteine ligase 2 (Acidovorax ebreus (strain TPSY) (Diaphorobacter sp. (strain TPSY))).